The primary structure comprises 362 residues: Methylthioribose-1-phosphate isomerase (362 aa).

The Proton donor role is filled by Asp252.

Belongs to the eIF-2B alpha/beta/delta subunits family. MtnA subfamily.

The protein resides in the cytoplasm. It is found in the nucleus. The enzyme catalyses 5-(methylsulfanyl)-alpha-D-ribose 1-phosphate = 5-(methylsulfanyl)-D-ribulose 1-phosphate. Its pathway is amino-acid biosynthesis; L-methionine biosynthesis via salvage pathway; L-methionine from S-methyl-5-thio-alpha-D-ribose 1-phosphate: step 1/6. Functionally, catalyzes the interconversion of methylthioribose-1-phosphate (MTR-1-P) into methylthioribulose-1-phosphate (MTRu-1-P). The protein is Methylthioribose-1-phosphate isomerase of Drosophila persimilis (Fruit fly).